The chain runs to 179 residues: Large ribosomal subunit protein uL5 (179 aa).

It belongs to the universal ribosomal protein uL5 family. In terms of assembly, part of the 50S ribosomal subunit; part of the 5S rRNA/L5/L18/L25 subcomplex. Contacts the 5S rRNA and the P site tRNA. Forms a bridge to the 30S subunit in the 70S ribosome.

Functionally, this is one of the proteins that bind and probably mediate the attachment of the 5S RNA into the large ribosomal subunit, where it forms part of the central protuberance. In the 70S ribosome it contacts protein S13 of the 30S subunit (bridge B1b), connecting the 2 subunits; this bridge is implicated in subunit movement. Contacts the P site tRNA; the 5S rRNA and some of its associated proteins might help stabilize positioning of ribosome-bound tRNAs. This Pectobacterium carotovorum subsp. carotovorum (strain PC1) protein is Large ribosomal subunit protein uL5.